The primary structure comprises 374 residues: LIM domain-binding protein 1-A (374 aa).

Disordered regions lie at residues 1 to 24, 249 to 297, and 322 to 374; these read MLDR…IGRH, PPAE…ALSS, and TRLE…QSSQ. The span at 267–297 shows a compositional bias: low complexity; it reads SGGSTMSSGGGNNNNSNSKKKSPASSFALSS. The LIM interaction domain (LID) domain occupies 299 to 338; that stretch reads DVMVVGEPTLMGGEFGDEDERLITRLENTQFDAANGIDDE. Positions 341 to 374 are enriched in polar residues; the sequence is FNSSPTMGTNSPWNSKAPSSQQGKNDNPSSQSSQ.

It belongs to the LDB family. As to expression, expressed ubiquitously in the embryo and adult.

The protein localises to the nucleus. Binds to the LIM domain of a wide variety of LIM domain-containing transcription factors. In Danio rerio (Zebrafish), this protein is LIM domain-binding protein 1-A (ldb1a).